The following is a 211-amino-acid chain: FMN-dependent NADH:quinone oxidoreductase 3 (211 aa).

Met-102 to Phe-105 provides a ligand contact to FMN.

This sequence belongs to the azoreductase type 1 family. As to quaternary structure, homodimer. FMN is required as a cofactor.

It carries out the reaction 2 a quinone + NADH + H(+) = 2 a 1,4-benzosemiquinone + NAD(+). The enzyme catalyses N,N-dimethyl-1,4-phenylenediamine + anthranilate + 2 NAD(+) = 2-(4-dimethylaminophenyl)diazenylbenzoate + 2 NADH + 2 H(+). In terms of biological role, quinone reductase that provides resistance to thiol-specific stress caused by electrophilic quinones. Its function is as follows. Also exhibits azoreductase activity. Catalyzes the reductive cleavage of the azo bond in aromatic azo compounds to the corresponding amines. The polypeptide is FMN-dependent NADH:quinone oxidoreductase 3 (Bacillus cereus (strain ATCC 10987 / NRS 248)).